Reading from the N-terminus, the 1357-residue chain is DNA-directed RNA polymerase subunit beta (1357 aa).

The protein belongs to the RNA polymerase beta chain family. In terms of assembly, the RNAP catalytic core consists of 2 alpha, 1 beta, 1 beta' and 1 omega subunit. When a sigma factor is associated with the core the holoenzyme is formed, which can initiate transcription.

The enzyme catalyses RNA(n) + a ribonucleoside 5'-triphosphate = RNA(n+1) + diphosphate. Its function is as follows. DNA-dependent RNA polymerase catalyzes the transcription of DNA into RNA using the four ribonucleoside triphosphates as substrates. The chain is DNA-directed RNA polymerase subunit beta from Pseudomonas putida (strain ATCC 700007 / DSM 6899 / JCM 31910 / BCRC 17059 / LMG 24140 / F1).